A 290-amino-acid polypeptide reads, in one-letter code: MPLDIKTELMGLIGYPLQHSLSPLMHNLTLKKMGLNCIYLALEIEEGKLPEIPSAIRTLNFRGLNVTIPYKEKIIPFLDELSPEAAAFGAVNVIKNKNGHLHGYNTDGRGFVEALREEGIDPGERALFIGAGGAARSVAFALAGLGVSRLDFLDLDFSRARQLAEFITSRSSSLASAFLMNTLEFQRLSRTASIIINCSPVGMFPDTGKSPVSKEDLRGSRAVLCDLIYNPLQSRFLSLGQELGLETMNGLGMFVQQGALTLEILLGQKPPLDYMKEVVQNQLEKRVDPD.

Residues 20 to 22 (SLS) and threonine 67 each bind shikimate. Lysine 71 (proton acceptor) is an active-site residue. Shikimate-binding residues include asparagine 92 and aspartate 107. Residues 130 to 134 (GAGGA) and leucine 227 each bind NADP(+). Residue tyrosine 229 coordinates shikimate. Glycine 250 is a binding site for NADP(+).

Belongs to the shikimate dehydrogenase family. Homodimer.

It catalyses the reaction shikimate + NADP(+) = 3-dehydroshikimate + NADPH + H(+). The protein operates within metabolic intermediate biosynthesis; chorismate biosynthesis; chorismate from D-erythrose 4-phosphate and phosphoenolpyruvate: step 4/7. Its function is as follows. Involved in the biosynthesis of the chorismate, which leads to the biosynthesis of aromatic amino acids. Catalyzes the reversible NADPH linked reduction of 3-dehydroshikimate (DHSA) to yield shikimate (SA). In Syntrophomonas wolfei subsp. wolfei (strain DSM 2245B / Goettingen), this protein is Shikimate dehydrogenase (NADP(+)).